A 118-amino-acid chain; its full sequence is M-zodatoxin-Lt8p (118 aa).

A signal peptide spans A1 to S3. Positions K4 to R43 are excised as a propeptide.

This sequence belongs to the cationic peptide 06 (cytoinsectotoxin) family. As to expression, expressed by the venom gland.

The protein localises to the secreted. In terms of biological role, insecticidal, cytolytic and antimicrobial peptide. Forms voltage-dependent, ion-permeable channels in membranes. At high concentration causes cell membrane lysis. This is M-zodatoxin-Lt8p (cit 1-15) from Lachesana tarabaevi (Spider).